The primary structure comprises 535 residues: Sodium channel protein Nach (535 aa).

At 1–49 (MGHQEELKPEQVDLKVTPFVGYLRRTWSDFCATSSIHGLKYTRDEDTNK) the chain is on the cytoplasmic side. A helical membrane pass occupies residues 50 to 70 (IVHLVWLLISVVMFICAVVMA). Residues 71–471 (RTFYMDYRSS…LVSNLGSAFS (401 aa)) lie on the Extracellular side of the membrane. N-linked (GlcNAc...) asparagine glycans are attached at residues N165, N239, and N367. A helical transmembrane segment spans residues 472–492 (LFVGMSMLSVVEIIYYFSVIL). Residues 493-535 (RKNYKLECETRSQMLHKKPKFAWPKANDTHSKEQKSVFIIHKS) are Cytoplasmic-facing.

It belongs to the amiloride-sensitive sodium channel (TC 1.A.6) family. As to expression, embryonic and larval tracheal system; dorsal trunk (but not at fusion with transverse connective), several branches and terminal cells. Also expressed in adult tracheal system; dorsal trunk, but not at the spiracles.

The protein resides in the membrane. Its function is as follows. Part of a complex that plays a role in tracheal liquid clearance. Probable role in sodium transport. This chain is Sodium channel protein Nach (Nach), found in Drosophila melanogaster (Fruit fly).